The sequence spans 548 residues: Mannosyltransferase APTG1 (548 aa).

The segment at 1–23 (MDIRKRKNAGGDGDGGADGASVN) is disordered. The next 3 membrane-spanning stretches (helical) occupy residues 41 to 61 (IFLFCLAFRVVNALLIQTYFN), 98 to 118 (LFAFLYKLLQVTGLDTPYIMI), and 146 to 166 (GNVATWSLFCQMANWFIFFCL). Residue Asn-167 is glycosylated (N-linked (GlcNAc...) asparagine). The next 7 membrane-spanning stretches (helical) occupy residues 169–189 (TFSNCLETVLTIMGLYYWPCI), 204–224 (LVIAALACAIRPTSAVIWLYV), 238–258 (FIILEVIPIGSLVLGFTCLLD), 260–280 (LMYGSWVIVPLNFLKFNFLSS), 294–314 (FTQGFLVMLFTFTPFSIAGII), 320–340 (KLSALILWVLAIYSILGHKEF), and 342–362 (FVLPVLPIALIFSGYAFAQME). Asn-382 carries an N-linked (GlcNAc...) asparagine glycan. The helical transmembrane segment at 392-412 (LSVYFLLATNIPMALYMSLFH) threads the bilayer. An N-linked (GlcNAc...) asparagine glycan is attached at Asn-490.

It belongs to the glycosyltransferase 22 family. As to expression, mostly expressed, mainly in vascular tissues, in leaves, roots, stems, flowers, siliques and pollen, and, to a lower extent, in seedlings.

It is found in the endoplasmic reticulum membrane. Functionally, mannosyltransferase involved in glycosylphosphatidylinositol-anchor biosynthesis. Required for the pollen tube micropylar guidance and embryo development by regulating GPI-anchor mediated protein localization (e.g. COBL10 and A36). The protein is Mannosyltransferase APTG1 of Arabidopsis thaliana (Mouse-ear cress).